Here is a 360-residue protein sequence, read N- to C-terminus: Glyceraldehyde-3-phosphate dehydrogenase (360 aa).

Residues 13–14, aspartate 35, and arginine 82 each bind NAD(+); that span reads RI. D-glyceraldehyde 3-phosphate is bound by residues 153-155, threonine 184, 213-214, and arginine 236; these read SCT and TG. The active-site Nucleophile is cysteine 154. Asparagine 318 serves as a coordination point for NAD(+).

The protein belongs to the glyceraldehyde-3-phosphate dehydrogenase family. In terms of assembly, homotetramer.

The catalysed reaction is D-glyceraldehyde 3-phosphate + phosphate + NAD(+) = (2R)-3-phospho-glyceroyl phosphate + NADH + H(+). It functions in the pathway carbohydrate degradation; glycolysis; pyruvate from D-glyceraldehyde 3-phosphate: step 1/5. Its function is as follows. Key enzyme in glycolysis that catalyzes the first step of the pathway by converting D-glyceraldehyde 3-phosphate (G3P) into 3-phospho-D-glyceroyl phosphate. Essential for the maintenance of cellular ATP levels and carbohydrate metabolism. The sequence is that of Glyceraldehyde-3-phosphate dehydrogenase from Atriplex nummularia (Old man saltbush).